The sequence spans 699 residues: Elongation factor G (699 aa).

One can recognise a tr-type G domain in the interval 8–290; it reads ERYRNIGIMA…GVIEYLPSPV (283 aa). GTP-binding positions include 17–24, 88–92, and 142–145; these read AHIDAGKT, DTPGH, and NKMD.

Belongs to the TRAFAC class translation factor GTPase superfamily. Classic translation factor GTPase family. EF-G/EF-2 subfamily.

Its subcellular location is the cytoplasm. Its function is as follows. Catalyzes the GTP-dependent ribosomal translocation step during translation elongation. During this step, the ribosome changes from the pre-translocational (PRE) to the post-translocational (POST) state as the newly formed A-site-bound peptidyl-tRNA and P-site-bound deacylated tRNA move to the P and E sites, respectively. Catalyzes the coordinated movement of the two tRNA molecules, the mRNA and conformational changes in the ribosome. The polypeptide is Elongation factor G (Alkalilimnicola ehrlichii (strain ATCC BAA-1101 / DSM 17681 / MLHE-1)).